The sequence spans 550 residues: Arginine--tRNA ligase (550 aa).

The short motif at 130–140 (ANPTGPIHIGG) is the 'HIGH' region element.

The protein belongs to the class-I aminoacyl-tRNA synthetase family. As to quaternary structure, monomer.

The protein resides in the cytoplasm. It catalyses the reaction tRNA(Arg) + L-arginine + ATP = L-arginyl-tRNA(Arg) + AMP + diphosphate. In Mycolicibacterium smegmatis (strain ATCC 700084 / mc(2)155) (Mycobacterium smegmatis), this protein is Arginine--tRNA ligase (argS).